A 101-amino-acid chain; its full sequence is Signal recognition particle 19 kDa protein (101 aa).

This sequence belongs to the SRP19 family. In terms of assembly, part of the signal recognition particle protein translocation system, which is composed of SRP and FtsY. Archaeal SRP consists of a 7S RNA molecule of 300 nucleotides and two protein subunits: SRP54 and SRP19.

The protein resides in the cytoplasm. Involved in targeting and insertion of nascent membrane proteins into the cytoplasmic membrane. Binds directly to 7S RNA and mediates binding of the 54 kDa subunit of the SRP. The protein is Signal recognition particle 19 kDa protein of Methanosarcina acetivorans (strain ATCC 35395 / DSM 2834 / JCM 12185 / C2A).